The sequence spans 92 residues: UPF0213 protein H16_B0156 (92 aa).

The GIY-YIG domain maps to 5–80 (SAWYLYLLEC…KRLSSTQKRA (76 aa)).

Belongs to the UPF0213 family.

This is UPF0213 protein H16_B0156 from Cupriavidus necator (strain ATCC 17699 / DSM 428 / KCTC 22496 / NCIMB 10442 / H16 / Stanier 337) (Ralstonia eutropha).